Reading from the N-terminus, the 361-residue chain is DNA polymerase subunit gamma-2, mitochondrial (361 aa).

The N-terminal 18 residues, 1-18 (MSRIQRCFKSLASAGFFR), are a transit peptide targeting the mitochondrion.

Component of the DNA polymerase gamma complex consisting of two subunits: the catalytic subunit DNApol-gamma/DNApolG1 and the accessory subunit PolG2/DNApol-gamma35. As to expression, expressed in ovaries (at protein level).

The protein localises to the mitochondrion. Its function is as follows. As accessory component of the DNA polymerase gamma complex is involved in the replication of mitochondrial DNA. Does not bind DNA. Essential for mitochondrial DNA maintenance and larval development. The sequence is that of DNA polymerase subunit gamma-2, mitochondrial from Drosophila melanogaster (Fruit fly).